The following is a 336-amino-acid chain: Probable tRNA pseudouridine synthase B (336 aa).

The active-site Nucleophile is the Asp-81. The 76-residue stretch at 248 to 323 folds into the PUA domain; sequence LKKVVVKDSA…VAVDVERVYM (76 aa).

It belongs to the pseudouridine synthase TruB family. Type 2 subfamily.

The catalysed reaction is uridine(55) in tRNA = pseudouridine(55) in tRNA. In terms of biological role, could be responsible for synthesis of pseudouridine from uracil-55 in the psi GC loop of transfer RNAs. In Methanocaldococcus jannaschii (strain ATCC 43067 / DSM 2661 / JAL-1 / JCM 10045 / NBRC 100440) (Methanococcus jannaschii), this protein is Probable tRNA pseudouridine synthase B.